The following is a 500-amino-acid chain: Aldehyde dehydrogenase, mitochondrial (500 aa).

Residues lysine 35, lysine 56, and lysine 142 each carry the N6-acetyllysine modification. 245-250 (GSTEVG) provides a ligand contact to NAD(+). Glutamate 268 acts as the Proton acceptor in catalysis. Cysteine 302 serves as the catalytic Nucleophile. N6-acetyllysine is present on residues lysine 358, lysine 366, lysine 409, lysine 411, lysine 424, and lysine 434.

This sequence belongs to the aldehyde dehydrogenase family. Homotetramer. Post-translationally, in response to mitochondrial stress, the precursor protein is ubiquitinated by the SIFI complex in the cytoplasm before mitochondrial import, leading to its degradation. Within the SIFI complex, UBR4 initiates ubiquitin chain that are further elongated or branched by KCMF1.

It is found in the mitochondrion matrix. The enzyme catalyses an aldehyde + NAD(+) + H2O = a carboxylate + NADH + 2 H(+). It participates in alcohol metabolism; ethanol degradation; acetate from ethanol: step 2/2. Its function is as follows. Required for clearance of cellular formaldehyde, a cytotoxic and carcinogenic metabolite that induces DNA damage. The polypeptide is Aldehyde dehydrogenase, mitochondrial (ALDH2) (Equus caballus (Horse)).